Reading from the N-terminus, the 308-residue chain is Ribosomal RNA small subunit methyltransferase H (308 aa).

Residues 35-37 (GGH), D54, F80, D101, and Q108 contribute to the S-adenosyl-L-methionine site.

This sequence belongs to the methyltransferase superfamily. RsmH family.

Its subcellular location is the cytoplasm. The catalysed reaction is cytidine(1402) in 16S rRNA + S-adenosyl-L-methionine = N(4)-methylcytidine(1402) in 16S rRNA + S-adenosyl-L-homocysteine + H(+). Its function is as follows. Specifically methylates the N4 position of cytidine in position 1402 (C1402) of 16S rRNA. The polypeptide is Ribosomal RNA small subunit methyltransferase H (Mycoplasma pneumoniae (strain ATCC 29342 / M129 / Subtype 1) (Mycoplasmoides pneumoniae)).